Here is a 291-residue protein sequence, read N- to C-terminus: GTPase Era (291 aa).

Residues 2–167 (KSGFVSIIGR…LDEIVKYLDK (166 aa)) form the Era-type G domain. The segment at 10–17 (GRTNAGKS) is G1. 10–17 (GRTNAGKS) contributes to the GTP binding site. Residues 36-40 (NATRR) form a G2 region. The tract at residues 57-60 (DTPG) is G3. Residues 57 to 61 (DTPGL) and 116 to 119 (NKVD) each bind GTP. Positions 116-119 (NKVD) are G4. The G5 stretch occupies residues 146-148 (YSS). Residues 186–274 (YRDFILESIY…LLKLFVTVKK (89 aa)) form the KH type-2 domain.

This sequence belongs to the TRAFAC class TrmE-Era-EngA-EngB-Septin-like GTPase superfamily. Era GTPase family. In terms of assembly, monomer.

It is found in the cytoplasm. It localises to the cell inner membrane. Functionally, an essential GTPase that binds both GDP and GTP, with rapid nucleotide exchange. Plays a role in 16S rRNA processing and 30S ribosomal subunit biogenesis and possibly also in cell cycle regulation and energy metabolism. This chain is GTPase Era, found in Campylobacter jejuni subsp. jejuni serotype O:6 (strain 81116 / NCTC 11828).